The chain runs to 1156 residues: Protein hu-li tai shao (1156 aa).

The tract at residues 1 to 36 (MTEVEQPPQNGIDPTAGEDDDNSKARPADIEQDMRE) is disordered. Positions 22–36 (NSKARPADIEQDMRE) are enriched in basic and acidic residues. Residue Ser-478 is modified to Phosphoserine. 2 positions are modified to phosphothreonine: Thr-480 and Thr-498. Position 603 is a phosphoserine (Ser-603). Tyr-608 is modified (phosphotyrosine). A phosphothreonine mark is found at Thr-609 and Thr-611. Position 614 is a phosphoserine (Ser-614). At Tyr-627 the chain carries Phosphotyrosine. Ser-630 bears the Phosphoserine mark. The tract at residues 897 to 956 (FLPSNHALPKDTDANNRDQTDRERPEAEQEESFHCAGDSGIGDSTGRRPRLATTSNDSSI) is disordered. Residues 904-929 (LPKDTDANNRDQTDRERPEAEQEESF) are compositionally biased toward basic and acidic residues.

Belongs to the aldolase class II family. Adducin subfamily. Isoform C is expressed in nurse cells. Isoform A is produced in the nurse cell but transported into the oocyte at stage 1, localizes to the oocyte cortex at stage 8 and to the anterior pole from day 9 onwards. Isoform B is expressed in the somatic follicle cells that surround the germline.

It localises to the cytoplasm. The protein resides in the cytoskeleton. The protein localises to the cell membrane. In terms of biological role, required for assembling actin at ring canals in developing egg chambers. Probably interacts with other developmental proteins involved in nurse cell/oocyte transport through the ring canals. Important for normal neuromotor function. The sequence is that of Protein hu-li tai shao (hts) from Drosophila melanogaster (Fruit fly).